A 419-amino-acid chain; its full sequence is MSRDVSPLPLICFLLGIPRSGTTLLAHLLQQHPDITAPPEPWLMLALEAFGRVDHRHPAGASLIQVAACEFLGRIDRISVSRVFADAAYSQYLAAAGKRTLIDKTPRYWMVLDYLHSLYPEAPHILLLRNPYAIAASLKSTWGVPFVSERCPPTSVSCLAELVTGTPTAAVALALADLVLGLPALAMQRGRRHTQVVRYERLVERPDEEIQRVIAGLGYDPAGIVFAGVEQTEYLRLSSFGDRRLLKKKAVDNRSVETWRTELTIEEMQTVTDLVGADLLVELGYEQSLQHARDAGIVDRGKAVTERYRRVFQTWWDLRRGEGEGIPAGACEYNSIFQQAEEDNTISSSSSTLGEAQRLPEFKLGENLQLGASMVAQLKRALMASEDDRATQLEALRNRDAAIEALRREVVRLEQSLTK.

In terms of biological role, required for the formation of sulfated nod factor. Proposed to transfer activated sulfate (PAPS) to the fucose of the nod factor. This Sinorhizobium fredii (strain NBRC 101917 / NGR234) protein is Nodulation protein NoeE (noeE).